The following is a 99-amino-acid chain: Keratinocyte differentiation-associated protein (99 aa).

The N-terminal stretch at Met-1 to Gly-22 is a signal peptide.

Highly expressed in skin, but not detectable in any other tissue examined. Expression restricted to cornified/stratified epithelia and not detected in non-cornified/stratified epithelia.

The protein localises to the secreted. Functionally, may act as a soluble regulator of keratinocyte differentiation. May play an important role in embryonic skin morphogenesis. This chain is Keratinocyte differentiation-associated protein, found in Canis lupus familiaris (Dog).